Reading from the N-terminus, the 427-residue chain is Endothelin-1 receptor (427 aa).

The signal sequence occupies residues 1–20 (METLCLRASFWLALVGCVIS). Over 21 to 80 (DNPERYSTNLSNHVDDFTTFRGTELSFLVTTHQPTNLVLPSNGSMHNYCPQQTKITSAFK) the chain is Extracellular. N29 and N62 each carry an N-linked (GlcNAc...) asparagine glycan. A helical transmembrane segment spans residues 81 to 102 (YINTVISCTIFIVGMVGNATLL). The Cytoplasmic segment spans residues 103-112 (RIIYQNKCMR). Residues 113-132 (NGPNALIASLALGDLIYVVI) traverse the membrane as a helical segment. Topologically, residues 133 to 159 (DLPINVFKLLAGRWPFDHNDFGVFLCK) are extracellular. C158 and C239 are joined by a disulfide. Residues 160–181 (LFPFLQKSSVGITVLNLCALSV) form a helical membrane-spanning segment. The Cytoplasmic segment spans residues 182–205 (DRYRAVASWSRVQGIGIPLVTAIE). The helical transmembrane segment at 206 to 229 (IVSIWILSFILAIPEAIGFVMVPF) threads the bilayer. Topologically, residues 230-256 (EYRGEQHKTCMLNATSKFMEFYQDVKD) are extracellular. The helical transmembrane segment at 257-278 (WWLFGFYFCMPLVCTAIFYTLM) threads the bilayer. Topologically, residues 279 to 306 (TCEMLNRRNGSLRIALSEHLKQRREVAK) are cytoplasmic. A helical transmembrane segment spans residues 307-328 (TVFCLVVIFALCWFPLHLSRIL). The Extracellular portion of the chain corresponds to 329–347 (KKTVYNEMDKNRCELLSFL). A helical membrane pass occupies residues 348-372 (LLMDYIGINLATMNSCINPIALYFV). Topologically, residues 373 to 427 (SKKFKNCFQSCLCCCCYQSKSLMTSVPMNGTSIQWKNHDQNNHNTDRSSHKDSMN) are cytoplasmic. The interval 406–427 (QWKNHDQNNHNTDRSSHKDSMN) is disordered. The segment covering 408 to 427 (KNHDQNNHNTDRSSHKDSMN) has biased composition (basic and acidic residues). S425 is modified (phosphoserine).

This sequence belongs to the G-protein coupled receptor 1 family. Endothelin receptor subfamily. EDNRA sub-subfamily. In terms of assembly, interacts with HDAC7 and KAT5. In terms of tissue distribution, isoform 1, isoform 3 and isoform 4 are expressed in a variety of tissues, with highest levels in the aorta and cerebellum, followed by lung, atrium and cerebral cortex, lower levels in the placenta, kidney, adrenal gland, duodenum, colon, ventricle and liver but no expression in umbilical vein endothelial cells. Within the placenta, isoform 1, isoform 2, isoform 3 and isoform 4 are expressed in the villi and stem villi vessels.

The protein resides in the cell membrane. Its function is as follows. Receptor for endothelin-1. Mediates its action by association with G proteins that activate a phosphatidylinositol-calcium second messenger system. The rank order of binding affinities for ET-A is: ET1 &gt; ET2 &gt;&gt; ET3. This is Endothelin-1 receptor from Homo sapiens (Human).